The sequence spans 96 residues: UPF0298 protein LCA_1075 (96 aa).

This sequence belongs to the UPF0298 family.

The protein resides in the cytoplasm. This chain is UPF0298 protein LCA_1075, found in Latilactobacillus sakei subsp. sakei (strain 23K) (Lactobacillus sakei subsp. sakei).